The chain runs to 400 residues: Phosphoglycerate kinase (400 aa).

Substrate contacts are provided by residues 21-23 (DFN), R37, 60-63 (HLGR), R121, and R154. ATP contacts are provided by residues K204, E326, and 355–358 (GGDS).

Belongs to the phosphoglycerate kinase family. Monomer.

The protein localises to the cytoplasm. It carries out the reaction (2R)-3-phosphoglycerate + ATP = (2R)-3-phospho-glyceroyl phosphate + ADP. It functions in the pathway carbohydrate degradation; glycolysis; pyruvate from D-glyceraldehyde 3-phosphate: step 2/5. This Chloroflexus aggregans (strain MD-66 / DSM 9485) protein is Phosphoglycerate kinase.